A 213-amino-acid polypeptide reads, in one-letter code: Putative 3-methyladenine DNA glycosylase (213 aa).

A disordered region spans residues 165-187; the sequence is GTPVPPDQVRNGPRTGVSGDGGV.

Belongs to the DNA glycosylase MPG family.

The polypeptide is Putative 3-methyladenine DNA glycosylase (Streptomyces avermitilis (strain ATCC 31267 / DSM 46492 / JCM 5070 / NBRC 14893 / NCIMB 12804 / NRRL 8165 / MA-4680)).